Reading from the N-terminus, the 503-residue chain is Arabinose import ATP-binding protein AraG (503 aa).

2 consecutive ABC transporter domains span residues 5–240 (LRFD…MVGR) and 253–497 (LGDV…LPQG). 37 to 44 (GENGAGKS) is an ATP binding site.

It belongs to the ABC transporter superfamily. Arabinose importer (TC 3.A.1.2.2) family. As to quaternary structure, the complex is composed of two ATP-binding proteins (AraG), two transmembrane proteins (AraH) and a solute-binding protein (AraF).

It is found in the cell inner membrane. It carries out the reaction L-arabinose(out) + ATP + H2O = L-arabinose(in) + ADP + phosphate + H(+). Functionally, part of the ABC transporter complex AraFGH involved in arabinose import. Responsible for energy coupling to the transport system. In Burkholderia pseudomallei (strain K96243), this protein is Arabinose import ATP-binding protein AraG.